An 86-amino-acid polypeptide reads, in one-letter code: Large ribosomal subunit protein uL23 (86 aa).

The protein belongs to the universal ribosomal protein uL23 family. In terms of assembly, part of the 50S ribosomal subunit. Contacts protein L29.

Its function is as follows. Binds to 23S rRNA. One of the proteins that surrounds the polypeptide exit tunnel on the outside of the ribosome. The sequence is that of Large ribosomal subunit protein uL23 from Methanococcus aeolicus (strain ATCC BAA-1280 / DSM 17508 / OCM 812 / Nankai-3).